Reading from the N-terminus, the 302-residue chain is Protein FdhE homolog (302 aa).

Belongs to the FdhE family.

The protein resides in the cytoplasm. Its function is as follows. Necessary for formate dehydrogenase activity. The sequence is that of Protein FdhE homolog from Haemophilus influenzae (strain PittGG).